Consider the following 93-residue polypeptide: Large ribosomal subunit protein bL31 (93 aa).

The tract at residues 68–93 (GSADAAADEKKPDAKNNNKDNTSKED) is disordered. Residues 74 to 93 (ADEKKPDAKNNNKDNTSKED) are compositionally biased toward basic and acidic residues.

This sequence belongs to the bacterial ribosomal protein bL31 family. Type A subfamily. In terms of assembly, part of the 50S ribosomal subunit.

In terms of biological role, binds the 23S rRNA. This Prochlorococcus marinus (strain MIT 9313) protein is Large ribosomal subunit protein bL31.